The following is a 4540-amino-acid chain: Dynein heavy chain, cytoplasmic (4540 aa).

The segment at 1–1796 (MEESETQLNV…LIQMGNAQFH (1796 aa)) is stem. 6 coiled-coil regions span residues 440–482 (EHIK…NVQQ), 698–722 (RVNYEKKLSQLFKEVRNLSNMKTKV), 794–827 (VKKFTDKVFELEQAVNGLNERIGQIESLCEAMKT), 975–995 (QQLIKDAYSQIGQLLEDMEQY), 1169–1251 (RSKK…LKMD), and 1295–1311 (QNKKIKDTCDEAQKQLN). 4 AAA regions span residues 1797–2018 (YGFE…VLNS), 2091–2348 (KELA…FTRI), 2457–2705 (EIDP…WKYA), and 2796–3056 (QFNE…AKRF). ATP is bound by residues 1835–1842 (GPAGTGKT), 2129–2136 (GPCGCGKS), 2496–2503 (GPPGSGKT), and 2834–2841 (GSSGVGKT). Coiled coils occupy residues 3076–3182 (NEKK…NAKQ), 3289–3367 (QLKY…RSQA), 3653–3688 (EDEKVIQTLEKLKKEAAVIVQEMKQADTIMNEVMNT), and 3820–3851 (QQLKQLEGITQQNQTFNRLIDNLNKNEDRWLN). Positions 3076–3367 (NEKKSQLEDQ…VQEKVTRSQA (292 aa)) are stalk. A disordered region spans residues 3140–3159 (KKKEDSTRLSSDAEKKAKEM). Residues 3444-3673 (LSRPSDRLNW…LKKEAAVIVQ (230 aa)) form an AAA 5 region. Residues 3908 to 4123 (ARKLINQILG…QRCSLDLIDE (216 aa)) are AAA 6. Coiled-coil stretches lie at residues 4238–4259 (QKLITKVQNLQQEGEEEITQIE) and 4313–4342 (RFLDREITVASKLLKAVRQNIEELIQLAQG).

The protein belongs to the dynein heavy chain family. In terms of assembly, consists of at least two heavy chains and a number of intermediate and light chains.

It localises to the cytoplasm. The protein resides in the cytoskeleton. Functionally, cytoplasmic dynein acts as a motor for the intracellular retrograde motility of vesicles and organelles along microtubules. Dynein has ATPase activity; the force-producing power stroke is thought to occur on release of ADP. This is Dynein heavy chain, cytoplasmic (DHC-8) from Paramecium tetraurelia.